The primary structure comprises 105 residues: Met repressor (105 aa).

This sequence belongs to the MetJ family. In terms of assembly, homodimer.

Its subcellular location is the cytoplasm. Its function is as follows. This regulatory protein, when combined with SAM (S-adenosylmethionine) represses the expression of the methionine regulon and of enzymes involved in SAM synthesis. The sequence is that of Met repressor from Haemophilus influenzae (strain PittEE).